A 641-amino-acid chain; its full sequence is RING finger containing E3 ubiquitin-protein ligase WSV403 (641 aa).

An RING-type; atypical zinc finger spans residues 329–371 (CVGCLYDIEDEKRCYKLPCGHFMHTFCLSNKCSKANFRCVKCF).

It carries out the reaction S-ubiquitinyl-[E2 ubiquitin-conjugating enzyme]-L-cysteine + [acceptor protein]-L-lysine = [E2 ubiquitin-conjugating enzyme]-L-cysteine + N(6)-ubiquitinyl-[acceptor protein]-L-lysine.. It participates in protein modification; protein ubiquitination. In terms of biological role, probable E3 ubiquitin-protein ligase which accepts ubiquitin from an E2 ubiquitin-conjugating enzyme in the form of a thioester and then directly transfers the ubiquitin to targeted substrates. This White spot syndrome virus (isolate Shrimp/China/Tongan/1996) (WSSV) protein is RING finger containing E3 ubiquitin-protein ligase WSV403.